Reading from the N-terminus, the 641-residue chain is Macrolide export ATP-binding/permease protein MacB (641 aa).

The ABC transporter domain occupies 2-236 (IFLKNICKNI…LILKTMPKEK (235 aa)). An ATP-binding site is contributed by 34-41 (GQSGSGKT). 4 consecutive transmembrane segments (helical) span residues 265-285 (ILTM…VALG), 519-539 (ACVA…IMLV), 571-591 (MICT…IFAF), and 604-624 (AYSV…FGFF).

This sequence belongs to the ABC transporter superfamily. Macrolide exporter (TC 3.A.1.122) family. As to quaternary structure, homodimer.

The protein resides in the cell inner membrane. Non-canonical ABC transporter that contains transmembrane domains (TMD), which form a pore in the inner membrane, and an ATP-binding domain (NBD), which is responsible for energy generation. Confers resistance against macrolides. The sequence is that of Macrolide export ATP-binding/permease protein MacB from Campylobacter jejuni subsp. jejuni serotype O:2 (strain ATCC 700819 / NCTC 11168).